A 238-amino-acid chain; its full sequence is Ubiquinone biosynthesis O-methyltransferase (238 aa).

S-adenosyl-L-methionine-binding residues include Arg38, Gly57, Asp78, and Leu124.

The protein belongs to the methyltransferase superfamily. UbiG/COQ3 family.

The enzyme catalyses a 3-demethylubiquinol + S-adenosyl-L-methionine = a ubiquinol + S-adenosyl-L-homocysteine + H(+). The catalysed reaction is a 3-(all-trans-polyprenyl)benzene-1,2-diol + S-adenosyl-L-methionine = a 2-methoxy-6-(all-trans-polyprenyl)phenol + S-adenosyl-L-homocysteine + H(+). The protein operates within cofactor biosynthesis; ubiquinone biosynthesis. Functionally, O-methyltransferase that catalyzes the 2 O-methylation steps in the ubiquinone biosynthetic pathway. The polypeptide is Ubiquinone biosynthesis O-methyltransferase (Marinobacter nauticus (strain ATCC 700491 / DSM 11845 / VT8) (Marinobacter aquaeolei)).